The chain runs to 139 residues: GSK3B-interacting protein (139 aa).

Positions M1–L22 are disordered. A required for PRKAR2A interaction; contributes to a protective effect against H(2)O(2)-induced apoptosis region spans residues V41 to L45. The interaction with GSK3B and acts as a GSK3B inhibitor stretch occupies residues S115–S139.

It belongs to the GSKIP family. As to quaternary structure, forms a complex composed of PRKAR2A or PRKAR2B, GSK3B and GSKIP through GSKIP interaction; facilitates PKA-induced phosphorylation of GSK3B leading to GSK3B inactivation; recruits DNM1L through GSK3B for PKA-mediated phosphorylation of DNM1L; promotes beta-catenin degradation through GSK3B-induced phosphorylation of beta-catenin; stabilizes beta-catenin and enhances Wnt-induced signaling through PKA-induced phosphorylation of beta-catenin. Interacts with GSK3B; induces GSK3B-mediated phosphorylation of GSKIP and inhibits GSK3B kinase activity. Phosphorylated by GSK3B. In terms of tissue distribution, detected in heart, brain, placenta, liver, skeletal muscle, kidney, testis, lung and pancreas.

The protein resides in the cytoplasm. It localises to the nucleus. A-kinase anchoring protein for GSK3B and PKA that regulates or facilitates their kinase activity towards their targets. The ternary complex enhances Wnt-induced signaling by facilitating the GSK3B- and PKA-induced phosphorylation of beta-catenin leading to beta-catenin degradation and stabilization respectively. Upon cAMP activation, the ternary complex contributes to neuroprotection against oxidative stress-induced apoptosis by facilitating the PKA-induced phosphorylation of DML1 and PKA-induced inactivation of GSK3B. During neurite outgrowth promotes neuron proliferation; while increases beta-catenin-induced transcriptional activity through GSK3B kinase activity inhibition, reduces N-cadherin level to promote cell cycle progression. The polypeptide is GSK3B-interacting protein (Homo sapiens (Human)).